The primary structure comprises 487 residues: Polyamine oxidase 4 (487 aa).

FAD contacts are provided by E53, R61, V242, and E429. The short motif at 485-487 (CRT) is the Microbody targeting signal element.

Belongs to the flavin monoamine oxidase family. Requires FAD as cofactor. In terms of tissue distribution, widely expressed.

The protein resides in the peroxisome. The enzyme catalyses spermine + O2 + H2O = 3-aminopropanal + spermidine + H2O2. The catalysed reaction is norspermine + O2 + H2O = norspermidine + 3-aminopropanal + H2O2. It carries out the reaction thermospermine + O2 + H2O = 3-aminopropanal + spermidine + H2O2. It participates in amine and polyamine degradation; spermine degradation. Flavoenzyme involved in polyamine back-conversion. Catalyzes the oxidation of the secondary amino group of polyamines, such as spermine. Substrate preference is spermine &gt; thermospermine &gt; norspermine. No activity detected when putrescine, spermidine or N(1)-acetylspermidine are used as substrates. Plays an important role in the regulation of polyamine intracellular concentration. This chain is Polyamine oxidase 4, found in Oryza sativa subsp. japonica (Rice).